The chain runs to 307 residues: Glycerol-3-phosphate dehydrogenase [NAD(P)+] (307 aa).

NADPH contacts are provided by Phe-11, Arg-31, and Lys-95. 3 residues coordinate sn-glycerol 3-phosphate: Lys-95, Gly-121, and Ser-123. Ala-125 provides a ligand contact to NADPH. Sn-glycerol 3-phosphate-binding residues include Lys-176, Asp-229, Ser-239, Arg-240, and Asn-241. The active-site Proton acceptor is the Lys-176. Arg-240 is a binding site for NADPH. Glu-261 is an NADPH binding site.

This sequence belongs to the NAD-dependent glycerol-3-phosphate dehydrogenase family.

It localises to the cytoplasm. The enzyme catalyses sn-glycerol 3-phosphate + NAD(+) = dihydroxyacetone phosphate + NADH + H(+). The catalysed reaction is sn-glycerol 3-phosphate + NADP(+) = dihydroxyacetone phosphate + NADPH + H(+). The protein operates within membrane lipid metabolism; glycerophospholipid metabolism. In terms of biological role, catalyzes the reduction of the glycolytic intermediate dihydroxyacetone phosphate (DHAP) to sn-glycerol 3-phosphate (G3P), the key precursor for phospholipid synthesis. The polypeptide is Glycerol-3-phosphate dehydrogenase [NAD(P)+] (Jannaschia sp. (strain CCS1)).